The sequence spans 290 residues: GTPase Era (290 aa).

The 143-residue stretch at 2–144 (KVLKVGVLGP…AIILEEFKPQ (143 aa)) folds into the Era-type G domain. The tract at residues 10-17 (GPTNAGKS) is G1. Residue 10–17 (GPTNAGKS) coordinates GTP. Residues 36 to 40 (NTTLL) form a G2 region. The tract at residues 58–61 (DVPG) is G3. Residue 58 to 62 (DVPGF) participates in GTP binding. Residues 97-100 (NKIE) form a G4 region. Residues 121–123 (INK) are G5. 122–125 (NKFH) is a binding site for GTP. A KH type-2 domain is found at 201 to 279 (CKNEIPHIAR…FIDIFVKTEK (79 aa)).

It belongs to the TRAFAC class TrmE-Era-EngA-EngB-Septin-like GTPase superfamily. Era GTPase family. Monomer.

Its subcellular location is the cytoplasm. It localises to the cell membrane. Functionally, an essential GTPase that binds both GDP and GTP, with rapid nucleotide exchange. Plays a role in 16S rRNA processing and 30S ribosomal subunit biogenesis and possibly also in cell cycle regulation and energy metabolism. In Mycoplasma genitalium (strain ATCC 33530 / DSM 19775 / NCTC 10195 / G37) (Mycoplasmoides genitalium), this protein is GTPase Era.